The primary structure comprises 635 residues: Endo-1,4-beta-xylanase B (635 aa).

Residues 1–337 (MNLKTAYEPY…KEAYYAVLKA (337 aa)) enclose the GH10 domain. The active-site Proton donor is the Glu150. Catalysis depends on Glu255, which acts as the Nucleophile.

It belongs to the glycosyl hydrolase 10 (cellulase F) family.

It carries out the reaction Endohydrolysis of (1-&gt;4)-beta-D-xylosidic linkages in xylans.. It participates in glycan degradation; xylan degradation. In terms of biological role, b.fibrisolvens is located in the rumen of ruminant animals, where it contributes to the animal's digestion of plant material by hydrolyzing hemicellulose with its xylanases. In Butyrivibrio fibrisolvens, this protein is Endo-1,4-beta-xylanase B (xynB).